A 467-amino-acid polypeptide reads, in one-letter code: Cysteine--tRNA ligase (467 aa).

Residue Cys-30 participates in Zn(2+) binding. Residues 32 to 42 carry the 'HIGH' region motif; sequence PTVYNYIHIGN. The Zn(2+) site is built by Cys-210, His-235, and Glu-239. The 'KMSKS' region motif lies at 267 to 271; sequence KMSKS. Lys-270 lines the ATP pocket. Position 271 is a phosphoserine (Ser-271).

Belongs to the class-I aminoacyl-tRNA synthetase family. In terms of assembly, monomer. It depends on Zn(2+) as a cofactor.

It localises to the cytoplasm. It catalyses the reaction tRNA(Cys) + L-cysteine + ATP = L-cysteinyl-tRNA(Cys) + AMP + diphosphate. This is Cysteine--tRNA ligase from Geobacillus thermodenitrificans (strain NG80-2).